We begin with the raw amino-acid sequence, 628 residues long: Biosynthetic arginine decarboxylase (628 aa).

The residue at position 99 (Lys-99) is an N6-(pyridoxal phosphate)lysine. 279-289 (VDVGGGLGIDY) contacts substrate.

This sequence belongs to the Orn/Lys/Arg decarboxylase class-II family. SpeA subfamily. Mg(2+) serves as cofactor. Pyridoxal 5'-phosphate is required as a cofactor.

The catalysed reaction is L-arginine + H(+) = agmatine + CO2. It participates in amine and polyamine biosynthesis; agmatine biosynthesis; agmatine from L-arginine: step 1/1. In terms of biological role, catalyzes the biosynthesis of agmatine from arginine. This Xylella fastidiosa (strain M23) protein is Biosynthetic arginine decarboxylase.